Consider the following 151-residue polypeptide: Nascent polypeptide-associated complex subunit beta (151 aa).

Residues 32–97 enclose the NAC-A/B domain; the sequence is EQDDTKLMEA…PQEKDVTQLI (66 aa). Residues 122–151 are disordered; it reads GKTPSMGGENAGADEDIPDLIEGQKFDEVE.

Belongs to the NAC-beta family. As to quaternary structure, part of the nascent polypeptide-associated complex (NAC), consisting of EGD2 and EGD1. NAC associates with ribosomes via EGD1.

It is found in the cytoplasm. The protein resides in the nucleus. Functionally, component of the nascent polypeptide-associated complex (NAC), a dynamic component of the ribosomal exit tunnel, protecting the emerging polypeptides from interaction with other cytoplasmic proteins to ensure appropriate nascent protein targeting. The NAC complex also promotes mitochondrial protein import by enhancing productive ribosome interactions with the outer mitochondrial membrane and blocks the inappropriate interaction of ribosomes translating non-secretory nascent polypeptides with translocation sites in the membrane of the endoplasmic reticulum. EGD1 may act as a transcription factor that exert a negative effect on the expression of several genes that are transcribed by RNA polymerase II. The polypeptide is Nascent polypeptide-associated complex subunit beta (EGD1) (Meyerozyma guilliermondii (strain ATCC 6260 / CBS 566 / DSM 6381 / JCM 1539 / NBRC 10279 / NRRL Y-324) (Yeast)).